We begin with the raw amino-acid sequence, 58 residues long: Succinate dehydrogenase subunit 8A, mitochondrial (58 aa).

In terms of assembly, component of complex II composed of eight subunits in plants: four classical SDH subunits SDH1, SDH2, SDH3 and SDH4 (a flavoprotein (FP), an iron-sulfur protein (IP), and a cytochrome b composed of a large and a small subunit.), as well as four subunits unknown in mitochondria from bacteria and heterotrophic eukaryotes.

Its subcellular location is the mitochondrion inner membrane. It functions in the pathway carbohydrate metabolism; tricarboxylic acid cycle. The polypeptide is Succinate dehydrogenase subunit 8A, mitochondrial (Oryza sativa subsp. japonica (Rice)).